A 305-amino-acid chain; its full sequence is UDP-3-O-acyl-N-acetylglucosamine deacetylase (305 aa).

Zn(2+) is bound by residues His-79, His-238, and Asp-242. His-265 functions as the Proton donor in the catalytic mechanism.

The protein belongs to the LpxC family. Zn(2+) serves as cofactor.

It catalyses the reaction a UDP-3-O-[(3R)-3-hydroxyacyl]-N-acetyl-alpha-D-glucosamine + H2O = a UDP-3-O-[(3R)-3-hydroxyacyl]-alpha-D-glucosamine + acetate. Its pathway is glycolipid biosynthesis; lipid IV(A) biosynthesis; lipid IV(A) from (3R)-3-hydroxytetradecanoyl-[acyl-carrier-protein] and UDP-N-acetyl-alpha-D-glucosamine: step 2/6. Catalyzes the hydrolysis of UDP-3-O-myristoyl-N-acetylglucosamine to form UDP-3-O-myristoylglucosamine and acetate, the committed step in lipid A biosynthesis. In Shewanella woodyi (strain ATCC 51908 / MS32), this protein is UDP-3-O-acyl-N-acetylglucosamine deacetylase.